Reading from the N-terminus, the 188-residue chain is Small ribosomal subunit protein uS7 (188 aa).

Belongs to the universal ribosomal protein uS7 family. As to quaternary structure, part of the 30S ribosomal subunit.

In terms of biological role, one of the primary rRNA binding proteins, it binds directly to 16S rRNA where it nucleates assembly of the head domain of the 30S subunit. Is located at the subunit interface close to the decoding center. This Methanococcus maripaludis (strain C6 / ATCC BAA-1332) protein is Small ribosomal subunit protein uS7.